A 419-amino-acid chain; its full sequence is Divergent protein kinase domain 1C (419 aa).

The Cytoplasmic portion of the chain corresponds to 1-22 (MARAAGARGPAGWCRRRGRCGR). Positions 16-17 (RR) match the May mediate ER retention motif. Residues 23 to 43 (GTLLAFAAWTAGWVLAAALLL) traverse the membrane as a helical segment. The Lumenal portion of the chain corresponds to 44–419 (RAHPGVLSER…TLRELQEAEK (376 aa)).

The protein belongs to the DIPK family. In terms of processing, among the many cysteines in the lumenal domain, most are probably involved in disulfide bonds.

The protein resides in the endoplasmic reticulum membrane. The sequence is that of Divergent protein kinase domain 1C from Homo sapiens (Human).